Consider the following 325-residue polypeptide: Fe-S cluster assembly protein DRE2 (325 aa).

Residues 1–169 (MTLGDRLGLI…KKKDAGNNEQ (169 aa)) are N-terminal SAM-like domain. The tract at residues 170–222 (VVKLSVEDVEDDLDDDPEVSNELLSKAKFFNSLSLNQDAEIDENNLIKSTDGD) is linker. The [2Fe-2S] cluster site is built by Cys-229, Cys-240, Cys-243, and Cys-245. A fe-S binding site A region spans residues 229 to 245 (CGKTNTKKRRACKDCTC). 4 residues coordinate [4Fe-4S] cluster: Cys-288, Cys-291, Cys-299, and Cys-302. 2 short sequence motifs (cx2C motif) span residues 288–291 (CGSC) and 299–302 (CSGC). Residues 288-302 (CGSCSLGDAFRCSGC) form a fe-S binding site B region.

Belongs to the anamorsin family. Monomer. Interacts with TAH18. Interacts with MIA40. [2Fe-2S] cluster serves as cofactor. It depends on [4Fe-4S] cluster as a cofactor.

Its subcellular location is the cytoplasm. The protein resides in the mitochondrion intermembrane space. Functionally, component of the cytosolic iron-sulfur (Fe-S) protein assembly (CIA) machinery required for the maturation of extramitochondrial Fe-S proteins. Part of an electron transfer chain functioning in an early step of cytosolic Fe-S biogenesis, facilitating the de novo assembly of a [4Fe-4S] cluster on the scaffold complex CFD1-NBP35. Electrons are transferred to DRE2 from NADPH via the FAD- and FMN-containing protein TAH18. TAH18-DRE2 are also required for the assembly of the diferric tyrosyl radical cofactor of ribonucleotide reductase (RNR), probably by providing electrons for reduction during radical cofactor maturation in the catalytic small subunit RNR2. This chain is Fe-S cluster assembly protein DRE2, found in Vanderwaltozyma polyspora (strain ATCC 22028 / DSM 70294 / BCRC 21397 / CBS 2163 / NBRC 10782 / NRRL Y-8283 / UCD 57-17) (Kluyveromyces polysporus).